The primary structure comprises 549 residues: Oxygen-dependent choline dehydrogenase (549 aa).

FAD is bound at residue D4–E33. The active-site Proton acceptor is H465.

It belongs to the GMC oxidoreductase family. The cofactor is FAD.

The enzyme catalyses choline + A = betaine aldehyde + AH2. It catalyses the reaction betaine aldehyde + NAD(+) + H2O = glycine betaine + NADH + 2 H(+). It participates in amine and polyamine biosynthesis; betaine biosynthesis via choline pathway; betaine aldehyde from choline (cytochrome c reductase route): step 1/1. In terms of biological role, involved in the biosynthesis of the osmoprotectant glycine betaine. Catalyzes the oxidation of choline to betaine aldehyde and betaine aldehyde to glycine betaine at the same rate. The chain is Oxygen-dependent choline dehydrogenase from Brucella anthropi (strain ATCC 49188 / DSM 6882 / CCUG 24695 / JCM 21032 / LMG 3331 / NBRC 15819 / NCTC 12168 / Alc 37) (Ochrobactrum anthropi).